We begin with the raw amino-acid sequence, 247 residues long: Uridylate kinase (247 aa).

ATP is bound at residue 15-18; that stretch reads KLSG. The segment at 23-28 is involved in allosteric activation by GTP; the sequence is GDEGFG. Glycine 57 contributes to the UMP binding site. Glycine 58 and arginine 62 together coordinate ATP. Residues aspartate 77 and 138 to 145 contribute to the UMP site; that span reads TGNPFFTT. 3 residues coordinate ATP: threonine 165, tyrosine 171, and aspartate 174.

The protein belongs to the UMP kinase family. In terms of assembly, homohexamer.

Its subcellular location is the cytoplasm. It catalyses the reaction UMP + ATP = UDP + ADP. Its pathway is pyrimidine metabolism; CTP biosynthesis via de novo pathway; UDP from UMP (UMPK route): step 1/1. Allosterically activated by GTP. Inhibited by UTP. In terms of biological role, catalyzes the reversible phosphorylation of UMP to UDP. This is Uridylate kinase from Colwellia psychrerythraea (strain 34H / ATCC BAA-681) (Vibrio psychroerythus).